We begin with the raw amino-acid sequence, 235 residues long: Small ribosomal subunit protein uS2 (235 aa).

Belongs to the universal ribosomal protein uS2 family.

In Caldanaerobacter subterraneus subsp. tengcongensis (strain DSM 15242 / JCM 11007 / NBRC 100824 / MB4) (Thermoanaerobacter tengcongensis), this protein is Small ribosomal subunit protein uS2.